The sequence spans 334 residues: Holliday junction branch migration complex subunit RuvB (334 aa).

The segment at 1-182 is large ATPase domain (RuvB-L); that stretch reads MNERMVDQSM…FGVHLRLEYY (182 aa). Residues Leu21, Arg22, Gly63, Lys66, Thr67, Thr68, 129–131, Arg172, Tyr182, and Arg219 contribute to the ATP site; that span reads EDF. A Mg(2+)-binding site is contributed by Thr67. The interval 183–253 is small ATPAse domain (RuvB-S); that stretch reads NESDLKEIII…TTKHALGLLQ (71 aa). Residues 256 to 334 form a head domain (RuvB-H) region; the sequence is QHGLDYIDHK…HFAKSNEERG (79 aa). Residues Arg292, Arg311, and Arg316 each contribute to the DNA site.

The protein belongs to the RuvB family. In terms of assembly, homohexamer. Forms an RuvA(8)-RuvB(12)-Holliday junction (HJ) complex. HJ DNA is sandwiched between 2 RuvA tetramers; dsDNA enters through RuvA and exits via RuvB. An RuvB hexamer assembles on each DNA strand where it exits the tetramer. Each RuvB hexamer is contacted by two RuvA subunits (via domain III) on 2 adjacent RuvB subunits; this complex drives branch migration. In the full resolvosome a probable DNA-RuvA(4)-RuvB(12)-RuvC(2) complex forms which resolves the HJ.

Its subcellular location is the cytoplasm. It carries out the reaction ATP + H2O = ADP + phosphate + H(+). The RuvA-RuvB-RuvC complex processes Holliday junction (HJ) DNA during genetic recombination and DNA repair, while the RuvA-RuvB complex plays an important role in the rescue of blocked DNA replication forks via replication fork reversal (RFR). RuvA specifically binds to HJ cruciform DNA, conferring on it an open structure. The RuvB hexamer acts as an ATP-dependent pump, pulling dsDNA into and through the RuvAB complex. RuvB forms 2 homohexamers on either side of HJ DNA bound by 1 or 2 RuvA tetramers; 4 subunits per hexamer contact DNA at a time. Coordinated motions by a converter formed by DNA-disengaged RuvB subunits stimulates ATP hydrolysis and nucleotide exchange. Immobilization of the converter enables RuvB to convert the ATP-contained energy into a lever motion, pulling 2 nucleotides of DNA out of the RuvA tetramer per ATP hydrolyzed, thus driving DNA branch migration. The RuvB motors rotate together with the DNA substrate, which together with the progressing nucleotide cycle form the mechanistic basis for DNA recombination by continuous HJ branch migration. Branch migration allows RuvC to scan DNA until it finds its consensus sequence, where it cleaves and resolves cruciform DNA. The polypeptide is Holliday junction branch migration complex subunit RuvB (Staphylococcus aureus (strain N315)).